The chain runs to 203 residues: Glycerol-3-phosphate acyltransferase (203 aa).

A run of 4 helical transmembrane segments spans residues 4-24 (LALIMTMAAYLLGSISSAVLI), 68-88 (IPVWGGYFLGIDPIILGVIAI), 117-137 (PIGLDLTGLVMLTWLSVAVLF), and 155-175 (TWMFKPQYTLPVAMLCCLIVF).

The protein belongs to the PlsY family. In terms of assembly, probably interacts with PlsX.

The protein localises to the cell inner membrane. It catalyses the reaction an acyl phosphate + sn-glycerol 3-phosphate = a 1-acyl-sn-glycero-3-phosphate + phosphate. It functions in the pathway lipid metabolism; phospholipid metabolism. Functionally, catalyzes the transfer of an acyl group from acyl-phosphate (acyl-PO(4)) to glycerol-3-phosphate (G3P) to form lysophosphatidic acid (LPA). This enzyme utilizes acyl-phosphate as fatty acyl donor, but not acyl-CoA or acyl-ACP. The sequence is that of Glycerol-3-phosphate acyltransferase from Vibrio campbellii (strain ATCC BAA-1116).